Consider the following 147-residue polypeptide: Hemoglobin subunit beta-1 (147 aa).

The region spanning 3-147 (HWTDFERSTI…VVFSLGKQYH (145 aa)) is the Globin domain. The heme b site is built by histidine 64 and histidine 93.

The protein belongs to the globin family. In terms of assembly, hb1 is a heterotetramer of two alpha-1 chains and two beta-1 chains. Red blood cells.

Functionally, involved in oxygen transport from gills to the various peripheral tissues. The sequence is that of Hemoglobin subunit beta-1 from Liparis tunicatus (Kelp snailfish).